The chain runs to 67 residues: Systemic RNA interference defective protein 5 (67 aa).

Topologically, residues 1–18 (MPSKNCAKNLHACQWERD) are extracellular. The chain crosses the membrane as a helical span at residues 19 to 39 (IALVFLGLMVLFNIGQVVYMN). Residues 40 to 67 (RARLYRLIRRGAEQIPADDEEPIIGIRD) lie on the Cytoplasmic side of the membrane.

Ubiquitously present in most tissues tested. Expressed in the somatic cells of intestine, muscle, neurons, somatic gonad and embryos but not in the germline (at protein level).

Its subcellular location is the late endosome membrane. Its function is as follows. Plays a role in RNA-mediated gene silencing by mediating transport of both ingested and endogenous dsRNA between cells. Not required for the uptake of dsRNA from the intestinal lumen. The protein is Systemic RNA interference defective protein 5 of Caenorhabditis elegans.